Here is a 719-residue protein sequence, read N- to C-terminus: Polyribonucleotide nucleotidyltransferase (719 aa).

The Mg(2+) site is built by Asp-507 and Asp-513. The KH domain maps to Pro-573–Ile-633. The 62-residue stretch at Gly-658–Glu-719 folds into the S1 motif domain.

Belongs to the polyribonucleotide nucleotidyltransferase family. The cofactor is Mg(2+).

Its subcellular location is the cytoplasm. The catalysed reaction is RNA(n+1) + phosphate = RNA(n) + a ribonucleoside 5'-diphosphate. In terms of biological role, involved in mRNA degradation. Catalyzes the phosphorolysis of single-stranded polyribonucleotides processively in the 3'- to 5'-direction. This chain is Polyribonucleotide nucleotidyltransferase, found in Campylobacter jejuni (strain RM1221).